The primary structure comprises 329 residues: Quinone oxidoreductase (329 aa).

N-acetylalanine is present on alanine 2. Lysine 23 carries the post-translational modification N6-acetyllysine. Residues tyrosine 53, 158 to 161 (SGGV), glycine 181, histidine 200, asparagine 229, 246 to 249 (VGSR), and 269 to 271 (VAL) each bind NADP(+). The residue at position 248 (serine 248) is a Phosphoserine.

This sequence belongs to the zinc-containing alcohol dehydrogenase family. Quinone oxidoreductase subfamily. Homotetramer.

The protein resides in the cytoplasm. The catalysed reaction is 2 a quinone + NADPH + H(+) = 2 a 1,4-benzosemiquinone + NADP(+). Does not have alcohol dehydrogenase activity. Binds NADP and acts through a one-electron transfer process. Orthoquinones, such as 1,2-naphthoquinone or 9,10-phenanthrenequinone, are the best substrates (in vitro). May act in the detoxification of xenobiotics. Interacts with (AU)-rich elements (ARE) in the 3'-UTR of target mRNA species and enhances their stability. NADPH binding interferes with mRNA binding. The sequence is that of Quinone oxidoreductase (CRYZ) from Sus scrofa (Pig).